A 485-amino-acid polypeptide reads, in one-letter code: Glucagon receptor (485 aa).

An N-terminal signal peptide occupies residues 1 to 26 (MPLTQLHCPHLLLLLLVLSCLPEAPS). At 27 to 137 (AQVMDFLFEK…EIEVQKGVAK (111 aa)) the chain is on the extracellular side. Intrachain disulfides connect Cys-44–Cys-68, Cys-59–Cys-101, and Cys-82–Cys-122. N-linked (GlcNAc...) asparagine glycosylation is found at Asn-47, Asn-60, Asn-75, Asn-79, and Asn-118. The chain crosses the membrane as a helical span at residues 138 to 162 (MYSSQQVMYTVGYSLSLGALLLALV). At 163-174 (ILLGLRKLHCTR) the chain is on the cytoplasmic side. The helical transmembrane segment at 175–199 (NYIHGNLFASFVLKAGSVLVIDWLL) threads the bilayer. Topologically, residues 200-226 (KTRYSQKIGDDLSVSVWLSDGAMAGCR) are extracellular. Cys-225 and Cys-295 are oxidised to a cystine. Residues 227–250 (VATVIMQYGIIANYCWLLVEGVYL) form a helical membrane-spanning segment. Residues 251–264 (YSLLSLATFSERSF) are Cytoplasmic-facing. Residues 265–286 (FSLYLGIGWGAPLLFVIPWVVV) form a helical membrane-spanning segment. Over 287–304 (KCLFENVQCWTSNDNMGF) the chain is Extracellular. Residues 305 to 327 (WWILRIPVFLALLINFFIFVHII) traverse the membrane as a helical segment. Residues 328–351 (HLLVAKLRAHQMHYADYKFRLARS) lie on the Cytoplasmic side of the membrane. An important for allosteric inhibitor binding region spans residues 351-354 (STLT). Residues 352–370 (TLTLIPLLGVHEVVFAFVT) traverse the membrane as a helical segment. Residues 371–382 (DEHAQGTLRSTK) lie on the Extracellular side of the membrane. Residues 383–403 (LFFDLFLSSFQGLLVAVLYCF) form a helical membrane-spanning segment. The Cytoplasmic portion of the chain corresponds to 404 to 485 (LNKEVQAELM…SLPRLADSPT (82 aa)). The span at 457 to 475 (AGSSSGTGCVPSMETSLAS) shows a compositional bias: polar residues. The segment at 457-485 (AGSSSGTGCVPSMETSLASSLPRLADSPT) is disordered. 2 positions are modified to phosphoserine: Ser-460 and Ser-476.

The protein belongs to the G-protein coupled receptor 2 family. Ligand-binding promotes phosphorylation of serine residues in the C-terminal cytoplasmic domain. Phosphorylation is important for receptor endocytosis after ligand-binding. Expressed predominantly in liver, kidney, adrenal, lung and stomach, while lower levels of expression are detected in brown and white adipose tissue, cerebellum, duodenum and heart.

Its subcellular location is the cell membrane. In terms of biological role, G-protein coupled receptor for glucagon that plays a central role in the regulation of blood glucose levels and glucose homeostasis. Regulates the rate of hepatic glucose production by promoting glycogen hydrolysis and gluconeogenesis. Plays an important role in mediating the responses to fasting. Ligand binding causes a conformation change that triggers signaling via guanine nucleotide-binding proteins (G proteins) and modulates the activity of down-stream effectors, such as adenylate cyclase. Promotes activation of adenylate cyclase. Besides, plays a role in signaling via a phosphatidylinositol-calcium second messenger system. The sequence is that of Glucagon receptor (Gcgr) from Mus musculus (Mouse).